A 327-amino-acid polypeptide reads, in one-letter code: GTPase Obg (327 aa).

The 159-residue stretch at 1 to 159 (MQFIDQANII…WEVQLELKLL (159 aa)) folds into the Obg domain. Positions 160–327 (AEVGIIGLPN…SLLSEVWKRI (168 aa)) constitute an OBG-type G domain. Residues 166–173 (GLPNAGKS), 191–195 (FTTLI), 213–216 (DIPG), 280–283 (NKIE), and 309–311 (SSS) each bind ATP. Mg(2+) contacts are provided by S173 and T193.

The protein belongs to the TRAFAC class OBG-HflX-like GTPase superfamily. OBG GTPase family. As to quaternary structure, monomer. It depends on Mg(2+) as a cofactor.

The protein resides in the cytoplasm. In terms of biological role, an essential GTPase which binds GTP, GDP and possibly (p)ppGpp with moderate affinity, with high nucleotide exchange rates and a fairly low GTP hydrolysis rate. Plays a role in control of the cell cycle, stress response, ribosome biogenesis and in those bacteria that undergo differentiation, in morphogenesis control. The sequence is that of GTPase Obg from Prochlorococcus marinus (strain AS9601).